Consider the following 401-residue polypeptide: Carbamoyl phosphate synthase small chain (401 aa).

The segment at 1–203 (MTETAPWTTR…KGYGTLGEAD (203 aa)) is CPSase. S56, G255, and G257 together coordinate L-glutamine. The region spanning 207–395 (HVVCVDFGVK…VNLLRENKGE (189 aa)) is the Glutamine amidotransferase type-1 domain. C284 (nucleophile) is an active-site residue. L-glutamine contacts are provided by L285, Q288, N326, G328, and F329. Residues H368 and E370 contribute to the active site.

Belongs to the CarA family. Composed of two chains; the small (or glutamine) chain promotes the hydrolysis of glutamine to ammonia, which is used by the large (or ammonia) chain to synthesize carbamoyl phosphate. Tetramer of heterodimers (alpha,beta)4.

The enzyme catalyses hydrogencarbonate + L-glutamine + 2 ATP + H2O = carbamoyl phosphate + L-glutamate + 2 ADP + phosphate + 2 H(+). It catalyses the reaction L-glutamine + H2O = L-glutamate + NH4(+). The protein operates within amino-acid biosynthesis; L-arginine biosynthesis; carbamoyl phosphate from bicarbonate: step 1/1. Its pathway is pyrimidine metabolism; UMP biosynthesis via de novo pathway; (S)-dihydroorotate from bicarbonate: step 1/3. Small subunit of the glutamine-dependent carbamoyl phosphate synthetase (CPSase). CPSase catalyzes the formation of carbamoyl phosphate from the ammonia moiety of glutamine, carbonate, and phosphate donated by ATP, constituting the first step of 2 biosynthetic pathways, one leading to arginine and/or urea and the other to pyrimidine nucleotides. The small subunit (glutamine amidotransferase) binds and cleaves glutamine to supply the large subunit with the substrate ammonia. In Agrobacterium fabrum (strain C58 / ATCC 33970) (Agrobacterium tumefaciens (strain C58)), this protein is Carbamoyl phosphate synthase small chain.